Reading from the N-terminus, the 1673-residue chain is Leucine-rich repeat- and IQ domain-containing protein 1 (1673 aa).

Disordered stretches follow at residues 22 to 48 and 189 to 208; these read ISISSLENDEVENDSVSDTQSDSSDTD and LEEKDKETLEAQNEREKRTF. The LRR 1 repeat unit spans residues 34–59; sequence NDSVSDTQSDSSDTDLLELPESVLHY. One copy of the LRR 2 repeat lies at 216–239; the sequence is QCWMRQFEVEKKHLEDLQKQDQDK. The IQ 1 domain occupies 291–320; sequence RYDAAVKIQATYRASVTYRKYSPIIKEQME. Residues 324 to 374 are disordered; it reads RRAQELKEKEAKIRQKEEEKRRRLEEEQRVEEEKKKKMLEERRRREREYEE. Basic and acidic residues predominate over residues 326–374; it reads AQELKEKEAKIRQKEEEKRRRLEEEQRVEEEKKKKMLEERRRREREYEE. The stretch at 491-516 is one LRR 3 repeat; sequence LPKLKINENLSKNQCSEQPSDQEFNA. Disordered regions lie at residues 544–658 and 679–702; these read ESDT…EEIP and EGEADLQDSASGKLAPSEEAGSHS. 2 stretches are compositionally biased toward basic and acidic residues: residues 549-567 and 588-602; these read TEEHVEHVREEKVGQETEK and EETREGLAEEIEIKE. The span at 603–629 shows a compositional bias: polar residues; that stretch reads MTQQGGPSDENNSSPISMQKSLPSLTP. One copy of the LRR 4 repeat lies at 641 to 665; that stretch reads LEEDQETDLKSERIEEIPEEGVLSC. The span at 647-656 shows a compositional bias: basic and acidic residues; it reads TDLKSERIEE. LRR repeat units follow at residues 830–852, 853–873, 874–894, 895–919, 921–939, 940–961, 962–983, 984–1005, 1007–1029, 1030–1054, and 1067–1090; these read CSNLQILSLRRCGLTSLQGLSHC, TRLKYIDAQENHIEAISCENL, ENLSVVLLNNNLLTSIHGFDG, CTNLQSLELSHNKITRISGLESLKY, QELTVDHNQLISTKGLCEA, PTIVYLDCSHNHLTGIDGIGNC, GLLQIIKLQGNYLREPPSLRNH, VLLRELHLDDNSISSVEGLSSC, LPLLQYLSISQNSLATIVPLFHL, VSLEKLDVSNNCLSDLTNVMCWFNA, and PVLQEINWRDSILKTLPALRVLNG. Disordered stretches follow at residues 1163 to 1230 and 1308 to 1330; these read AHEQ…HCEE and PTTTEPLQDPLINNQTTSNEERR. Polar residues-rich tracts occupy residues 1168 to 1226 and 1308 to 1325; these read DVNT…PSTS and PTTTEPLQDPLINNQTTS. 2 consecutive IQ domains span residues 1280–1309 and 1340–1369; these read PTKAAMVIQAQWRSYIAHRQINCSAEMHPT and REKAALHIQAVWKGFILRKKLATARKAIKD. Residues 1378 to 1405 form an LRR 16 repeat; the sequence is EIDLEDFEFDEDALEKDWPALDSTGFPS.

The chain is Leucine-rich repeat- and IQ domain-containing protein 1 (Lrriq1) from Mus musculus (Mouse).